The sequence spans 442 residues: MQEMNLLPTPESPVTRQEKMATVWDEAEQDGIGEEVLKMSTEEIVQRTRLLDSEIKIMKSEVLRVTHELQAMKDKIKENSEKIKVNKTLPYLVSNVIELLDVDPNDQEEDGANIDLDSQRKGKCAVIKTSTRQTYFLPVIGLVDAEKLKPGDLVGVNKDSYLILETLPTEYDSRVKAMEVDERPTEQYSDIGGLDKQIQELVEAIVLPMNHKEKFENLGIQPPKGVLMYGPPGTGKTLLARACAAQTKATFLKLAGPQLVQMFIGDGAKLVRDAFALAKEKAPSIIFIDELDAIGTKRFDSEKAGDREVQRTMLELLNQLDGFQPNTQVKVIAATNRVDILDPALLRSGRLDRKIEFPMPNEEARARIMQIHSRKMNVSPDVNYEELARCTDDFNGAQCKAVCVEAGMIALRRGATELTHEDYMEGILEVQAKKKANLQYYA.

Position 12 is a phosphoserine (S12). An ATP-binding site is contributed by 230-237 (GPPGTGKT). S379 is subject to Phosphoserine.

It belongs to the AAA ATPase family. In terms of assembly, component of the 19S proteasome regulatory particle complex. The 26S proteasome consists of a 20S core particle (CP) and two 19S regulatory subunits (RP). The regulatory particle is made of a lid composed of 9 subunits, a base containing 6 ATPases including PSMC3 and few additional components. Interacts with PAAF1.

It is found in the cytoplasm. The protein resides in the nucleus. Its function is as follows. Component of the 26S proteasome, a multiprotein complex involved in the ATP-dependent degradation of ubiquitinated proteins. This complex plays a key role in the maintenance of protein homeostasis by removing misfolded or damaged proteins, which could impair cellular functions, and by removing proteins whose functions are no longer required. Therefore, the proteasome participates in numerous cellular processes, including cell cycle progression, apoptosis, or DNA damage repair. PSMC3 belongs to the heterohexameric ring of AAA (ATPases associated with diverse cellular activities) proteins that unfolds ubiquitinated target proteins that are concurrently translocated into a proteolytic chamber and degraded into peptides. The chain is 26S proteasome regulatory subunit 6A (Psmc3) from Mus musculus (Mouse).